Here is a 215-residue protein sequence, read N- to C-terminus: Ribosomal RNA small subunit methyltransferase G (215 aa).

Residues Gly77, Phe82, 130–131 (IE), and Arg146 contribute to the S-adenosyl-L-methionine site.

The protein belongs to the methyltransferase superfamily. RNA methyltransferase RsmG family.

The protein resides in the cytoplasm. The catalysed reaction is guanosine(527) in 16S rRNA + S-adenosyl-L-methionine = N(7)-methylguanosine(527) in 16S rRNA + S-adenosyl-L-homocysteine. Specifically methylates the N7 position of guanine in position 527 of 16S rRNA. In Bartonella henselae (strain ATCC 49882 / DSM 28221 / CCUG 30454 / Houston 1) (Rochalimaea henselae), this protein is Ribosomal RNA small subunit methyltransferase G.